Reading from the N-terminus, the 378-residue chain is 7-methylxanthine methyltransferase 1 (378 aa).

Y18, C61, N66, D100, L101, S139, F140, and C156 together coordinate S-adenosyl-L-homocysteine. Theobromine is bound by residues Y157, H160, and W161. Mg(2+)-binding residues include N178, D260, F262, and N263. Y362 contacts theobromine.

The protein belongs to the methyltransferase superfamily. Type-7 methyltransferase family. Requires Mg(2+) as cofactor. Mainly expressed, at low levels, in leaves and fruits (grains). Also present, at lower levels, in roots, stamens and pistils.

Its subcellular location is the cytoplasm. The enzyme catalyses 7-methylxanthine + S-adenosyl-L-methionine = theobromine + S-adenosyl-L-homocysteine + H(+). It participates in alkaloid biosynthesis. In terms of biological role, involved in the biosynthesis of caffeine. Catalyzes the conversion of 7-methylxanthine (7mX) to theobromine and of paraxanthine to caffeine. This is 7-methylxanthine methyltransferase 1 from Coffea canephora (Robusta coffee).